A 173-amino-acid polypeptide reads, in one-letter code: 2-C-methyl-D-erythritol 2,4-cyclodiphosphate synthase (173 aa).

2 residues coordinate a divalent metal cation: D17 and H19. 4-CDP-2-C-methyl-D-erythritol 2-phosphate-binding positions include 17–19 (DVH) and 49–50 (HS). Residue H57 coordinates a divalent metal cation. Residues 76–80 (FPNTD), 147–150 (TTTE), F154, and R157 each bind 4-CDP-2-C-methyl-D-erythritol 2-phosphate.

It belongs to the IspF family. As to quaternary structure, homotrimer. Requires a divalent metal cation as cofactor.

It catalyses the reaction 4-CDP-2-C-methyl-D-erythritol 2-phosphate = 2-C-methyl-D-erythritol 2,4-cyclic diphosphate + CMP. The protein operates within isoprenoid biosynthesis; isopentenyl diphosphate biosynthesis via DXP pathway; isopentenyl diphosphate from 1-deoxy-D-xylulose 5-phosphate: step 4/6. Functionally, involved in the biosynthesis of isopentenyl diphosphate (IPP) and dimethylallyl diphosphate (DMAPP), two major building blocks of isoprenoid compounds. Catalyzes the conversion of 4-diphosphocytidyl-2-C-methyl-D-erythritol 2-phosphate (CDP-ME2P) to 2-C-methyl-D-erythritol 2,4-cyclodiphosphate (ME-CPP) with a corresponding release of cytidine 5-monophosphate (CMP). This Ehrlichia canis (strain Jake) protein is 2-C-methyl-D-erythritol 2,4-cyclodiphosphate synthase.